We begin with the raw amino-acid sequence, 130 residues long: Small ribosomal subunit protein uS11 (130 aa).

Belongs to the universal ribosomal protein uS11 family. As to quaternary structure, part of the 30S ribosomal subunit. Interacts with proteins S7 and S18. Binds to IF-3.

Functionally, located on the platform of the 30S subunit, it bridges several disparate RNA helices of the 16S rRNA. Forms part of the Shine-Dalgarno cleft in the 70S ribosome. This Prochlorococcus marinus (strain MIT 9301) protein is Small ribosomal subunit protein uS11.